The primary structure comprises 2202 residues: Activating signal cointegrator 1 complex subunit 3 (2202 aa).

The required for interaction with ASCC2 stretch occupies residues 1 to 400 (MALPRLTGAL…RQRDADVEKI (400 aa)). At Ser-12 the chain carries Phosphoserine. Coiled-coil stretches lie at residues 18–79 (KQDN…AAKQ) and 328–356 (IQSE…KAGE). A Helicase ATP-binding 1 domain is found at 486–669 (ETAYNTNENM…FLHVNPYIGL (184 aa)). An ATP-binding site is contributed by 499–506 (APTGAGKT). Lys-572 is modified (N6-acetyllysine). Residues 611 to 614 (DEVH) carry the DEVH box motif. Residues 728–914 (TVRTAMSLIE…GTVTNVEEAV (187 aa)) enclose the Helicase C-terminal 1 domain. The SEC63 1 domain occupies 978–1287 (STDLGRTASH…GAEAVCIINF (310 aa)). Residues 1336-1511 (HTLYHTDCNV…WLNIKQMGLF (176 aa)) form the Helicase ATP-binding 2 domain. ATP is bound at residue 1349–1356 (APTGSGKT). A DEIH box motif is present at residues 1453-1456 (DEIH). Residues 1544–1739 (PAFQAIRSHS…VLSDHLNAEI (196 aa)) form the Helicase C-terminal 2 domain. In terms of domain architecture, SEC63 2 spans 1812-2176 (PLTYGRIASY…LGLDQQYDIY (365 aa)). Phosphoserine is present on Ser-2195.

Belongs to the helicase family. In terms of assembly, identified in the ASCC complex that contains ASCC1, ASCC2 and ASCC3. Functions as scaffolding subunit that interacts directly with both ASCC1 and ASCC2. Interacts directly with ALKBH3, and thereby recruits ALKBH3 to the ASCC complex. Part of the ASC-1/TRIP4 complex, that contains TRIP4, ASCC1, ASCC2 and ASCC3. Part of the RQT (ribosome quality control trigger) complex, that contains ASCC2, ASCC3 and TRIP4. Associates with ribosomes; recruited to collided ribosomes. Interacts with ZCCHC4. Interacts with ZNF598. Interacts with RPS3. As to expression, ubiquitous.

The protein resides in the nucleus. The protein localises to the nucleus speckle. It is found in the cytoplasm. Its subcellular location is the cytosol. The enzyme catalyses Couples ATP hydrolysis with the unwinding of duplex DNA by translocating in the 3'-5' direction.. The catalysed reaction is ATP + H2O = ADP + phosphate + H(+). Its function is as follows. ATPase involved both in DNA repair and rescue of stalled ribosomes. 3'-5' DNA helicase involved in repair of alkylated DNA: promotes DNA unwinding to generate single-stranded substrate needed for ALKBH3, enabling ALKBH3 to process alkylated N3-methylcytosine (3mC) within double-stranded regions. Also involved in activation of the ribosome quality control (RQC) pathway, a pathway that degrades nascent peptide chains during problematic translation. Drives the splitting of stalled ribosomes that are ubiquitinated in a ZNF598-dependent manner, as part of the ribosome quality control trigger (RQT) complex. Part of the ASC-1 complex that enhances NF-kappa-B, SRF and AP1 transactivation. This Homo sapiens (Human) protein is Activating signal cointegrator 1 complex subunit 3 (ASCC3).